The primary structure comprises 419 residues: Probable pectate lyase C (419 aa).

An N-terminal signal peptide occupies residues 1-19; that stretch reads MRLTPSLISCLSLLHFTSA. N-linked (GlcNAc...) asparagine glycosylation is found at asparagine 48, asparagine 164, and asparagine 201. Arginine 204 is an active-site residue. The 36-residue stretch at 261 to 296 folds into the EF-hand domain; sequence NENFHAYVETNYYDSDKDGTLNGSELGVDSTNYGGM. 4 residues coordinate Ca(2+): aspartate 274, aspartate 276, aspartate 278, and threonine 280. N-linked (GlcNAc...) asparagine glycosylation is present at asparagine 282. Glutamate 285 contacts Ca(2+). The interval 350–395 is disordered; it reads ALISDEADMGGAGDLDQGTTPTDTDGDGIPDDAEAELGTDPNTADS. Over residues 363–372 the composition is skewed to low complexity; sequence DLDQGTTPTD. Acidic residues predominate over residues 373-386; that stretch reads TDGDGIPDDAEAEL.

It belongs to the polysaccharide lyase 1 family. Requires Ca(2+) as cofactor.

It localises to the secreted. It carries out the reaction Eliminative cleavage of (1-&gt;4)-alpha-D-galacturonan to give oligosaccharides with 4-deoxy-alpha-D-galact-4-enuronosyl groups at their non-reducing ends.. Pectinolytic enzyme consist of four classes of enzymes: pectin lyase, polygalacturonase, pectin methylesterase and rhamnogalacturonase. Among pectinolytic enzymes, pectin lyase is the most important in depolymerization of pectin, since it cleaves internal glycosidic bonds of highly methylated pectins. Favors pectate, the anion, over pectin, the methyl ester. This chain is Probable pectate lyase C (plyC), found in Aspergillus flavus (strain ATCC 200026 / FGSC A1120 / IAM 13836 / NRRL 3357 / JCM 12722 / SRRC 167).